Reading from the N-terminus, the 63-residue chain is MNNKINNIKITQVHSAIGRKYDQRLILVGLGLNKINKSVILANTNSIKGMVKKVKHLLKIENM.

This sequence belongs to the universal ribosomal protein uL30 family. As to quaternary structure, part of the 50S ribosomal subunit.

The sequence is that of Large ribosomal subunit protein uL30 from Rickettsia peacockii (strain Rustic).